The chain runs to 403 residues: RNA-binding motif, single-stranded-interacting protein 1 (403 aa).

Positions 30 to 56 are disordered; that stretch reads PAHPMAPPSPSTTSSNNNSSSSSNSGW. The segment covering 40–54 has biased composition (low complexity); sequence STTSSNNNSSSSSNS. RRM domains follow at residues 62–135 and 141–226; these read TNLY…MAKQ and TNLY…FADG. Position 208 is a phosphothreonine (threonine 208).

The protein resides in the nucleus. In terms of biological role, single-stranded DNA binding protein that interacts with the region upstream of the C-myc gene. Binds specifically to the DNA sequence motif 5'-[AT]CT[AT][AT]T-3'. Probably has a role in DNA replication. This is RNA-binding motif, single-stranded-interacting protein 1 (RBMS1) from Bos taurus (Bovine).